Here is a 189-residue protein sequence, read N- to C-terminus: GTPase KRas (189 aa).

N-acetylmethionine; in GTPase KRas; alternate is present on Met-1. Thr-2 carries the post-translational modification N-acetylthreonine; in GTPase KRas, N-terminally processed. GTP is bound by residues 10 to 18 (GAGGVGKSA), 29 to 35 (VDEYDPT), and 59 to 60 (AG). The short motif at 32-40 (YDPTIEDSY) is the Effector region element. A glycan ((Microbial infection) O-linked (Glc) threonine; by P.sordellii toxin TcsL) is linked at Thr-35. Lys-104 bears the N6-acetyllysine mark. 116–119 (NKCD) lines the GTP pocket. Residues 166–185 (YRLKKISKEEKTPGCVKIKK) are hypervariable region. Residue Lys-170 forms a Glycyl lysine isopeptide (Lys-Gly) (interchain with G-Cter in ubiquitin) linkage. Cys-180 carries S-palmitoyl cysteine lipidation. 3 N6-palmitoyl lysine lipidation sites follow: Lys-182, Lys-184, and Lys-185. Cys-186 bears the Cysteine methyl ester mark. Cys-186 carries S-farnesyl cysteine lipidation. Residues 187–189 (IIM) constitute a propeptide, removed in mature form.

Belongs to the small GTPase superfamily. Ras family. Interacts with PHLPP. Interacts (active GTP-bound form preferentially) with RGS14. Interacts (when farnesylated) with PDE6D; this promotes dissociation from the cell membrane. Interacts with SOS1. Interacts (when farnesylated) with GPR31. Interacts with RAP1GDS1. Interacts (active GTP-bound form) with both SHOC2 and PP1c (all isoforms) to form a tertiary complex; SHOC2 and PP1c preferably bind M-Ras/MRAS, but they also bind K-Ras/KRAS, N-Ras/NRAS and H-Ras/HRAS. Interacts (GTP-bound form) with MAPKAP1/SIN1; inhibiting K-Ras/KRAS activity. In terms of assembly, interacts with GPR31; in a farnelysation-dependent manner. Acetylation at Lys-104 prevents interaction with guanine nucleotide exchange factors (GEFs). In terms of processing, palmitoylated at Lys-182, Lys-184 and Lys-185. Palmitoylation on lysine residues is promoted by palmitoylation at Cys-180. Lysine-depalmitoylation by SIRT2 promotes its localization to endomembranes in endocytic pathways. Post-translationally, ubiquitinated by the BCR(LZTR1) E3 ubiquitin ligase complex at Lys-170 in a non-degradative manner, leading to inhibit Ras signaling by decreasing Ras association with membranes. (Microbial infection) Glucosylated at Thr-35 by P.sordellii toxin TcsL.

The protein localises to the cell membrane. It localises to the endomembrane system. It is found in the cytoplasm. The protein resides in the cytosol. The catalysed reaction is GTP + H2O = GDP + phosphate + H(+). Its activity is regulated as follows. Alternates between an inactive form bound to GDP and an active form bound to GTP. Activated by a guanine nucleotide-exchange factor (GEF) and inactivated by a GTPase-activating protein (GAP). Interaction with SOS1 promotes exchange of bound GDP to GTP. Ras proteins bind GDP/GTP and possess intrinsic GTPase activity. Plays an important role in the regulation of cell proliferation. Plays a role in promoting oncogenic events by inducing transcriptional silencing of tumor suppressor genes (TSGs) in colorectal cancer (CRC) cells in a ZNF304-dependent manner. The chain is GTPase KRas (KRAS) from Homo sapiens (Human).